We begin with the raw amino-acid sequence, 368 residues long: WD repeat-containing protein RUP2 (368 aa).

WD repeat units follow at residues 38–77, 97–138, 141–184, 192–232, 236–276, 279–318, and 330–368; these read SASDVIGAIEFDPTDNIVATAGISRKIRFYGLPSLLRNNA, CTPA…PVFE, EHGG…EESV, ICRS…DPAL, GHTK…RTYE, VNNRNFVGLSVWRNGALFGCGSENNRVFVYDRRWGKPVWV, and SDKRFVSSVCWRQSGVDQCTLVAGGSDGVLQVYVGKRKP.

Interacts with UVR8.

The protein localises to the nucleus. The protein resides in the cytoplasm. It is found in the cytosol. In terms of biological role, functions in association with RUP1 as repressor of UV-B-induced photomorphogenesis mediated by UVR8 and HY5. Plays a crucial negative feedback regulatory role downstream of UVR8-COP1 to inhibit UVR8 function, balance UV-B-specific responses and ensure normal plant growth. Is involved in the regulation of photoperiodic flowering and vegetative development. May act as negative regulator of photoperiodic flowering by suppressing flowering through the action of CONSTANS (CO) and FLOWERING LOCUS T (FT). This chain is WD repeat-containing protein RUP2 (RUP2), found in Arabidopsis thaliana (Mouse-ear cress).